The sequence spans 183 residues: Inner membrane-spanning protein YciB (183 aa).

The next 5 helical transmembrane spans lie at 19-39 (LYGV…QLIV), 53-73 (IMGI…DLNF), 76-96 (WKVT…QFVF), 121-141 (LGWA…SYYF), and 151-171 (TFGF…YLYP).

It belongs to the YciB family.

The protein resides in the cell inner membrane. Functionally, plays a role in cell envelope biogenesis, maintenance of cell envelope integrity and membrane homeostasis. This Actinobacillus pleuropneumoniae serotype 5b (strain L20) protein is Inner membrane-spanning protein YciB.